A 264-amino-acid polypeptide reads, in one-letter code: Acyl-[acyl-carrier-protein]--UDP-N-acetylglucosamine O-acyltransferase (264 aa).

This sequence belongs to the transferase hexapeptide repeat family. LpxA subfamily. As to quaternary structure, homotrimer.

The protein localises to the cytoplasm. The catalysed reaction is a (3R)-hydroxyacyl-[ACP] + UDP-N-acetyl-alpha-D-glucosamine = a UDP-3-O-[(3R)-3-hydroxyacyl]-N-acetyl-alpha-D-glucosamine + holo-[ACP]. It participates in glycolipid biosynthesis; lipid IV(A) biosynthesis; lipid IV(A) from (3R)-3-hydroxytetradecanoyl-[acyl-carrier-protein] and UDP-N-acetyl-alpha-D-glucosamine: step 1/6. Involved in the biosynthesis of lipid A, a phosphorylated glycolipid that anchors the lipopolysaccharide to the outer membrane of the cell. This Rickettsia canadensis (strain McKiel) protein is Acyl-[acyl-carrier-protein]--UDP-N-acetylglucosamine O-acyltransferase.